The chain runs to 94 residues: Large ribosomal subunit protein uL23 (94 aa).

The protein belongs to the universal ribosomal protein uL23 family. As to quaternary structure, part of the 50S ribosomal subunit. Contacts protein L29, and trigger factor when it is bound to the ribosome.

In terms of biological role, one of the early assembly proteins it binds 23S rRNA. One of the proteins that surrounds the polypeptide exit tunnel on the outside of the ribosome. Forms the main docking site for trigger factor binding to the ribosome. The protein is Large ribosomal subunit protein uL23 of Symbiobacterium thermophilum (strain DSM 24528 / JCM 14929 / IAM 14863 / T).